A 183-amino-acid polypeptide reads, in one-letter code: Ferritin heavy chain (183 aa).

Position 1 is an N-acetylmethionine (M1). T2 carries the post-translational modification N-acetylthreonine; in Ferritin heavy chain, N-terminally processed. The 150-residue stretch at 11–160 (QNYHQDSEAA…DHVTNLRKMG (150 aa)) folds into the Ferritin-like diiron domain. Residues E28, E63, H66, E108, and Q142 each coordinate Fe cation. Residues S179 and S183 each carry the phosphoserine modification.

This sequence belongs to the ferritin family. In terms of assembly, oligomer of 24 subunits. There are two types of subunits: L (light) chain and H (heavy) chain. The major chain can be light or heavy, depending on the species and tissue type. In the human liver, the heavy chain is predominant. The functional molecule forms a roughly spherical shell with a diameter of 12 nm and contains a central cavity into which the insoluble mineral iron core is deposited. Interacts with NCOA4; NCOA4 promotes targeting of the iron-binding ferritin complex to autolysosomes following starvation or iron depletion. In terms of tissue distribution, expressed in the liver.

It localises to the cytoplasm. Its subcellular location is the lysosome. The protein localises to the cytoplasmic vesicle. It is found in the autophagosome. The catalysed reaction is 4 Fe(2+) + O2 + 4 H(+) = 4 Fe(3+) + 2 H2O. Functionally, stores iron in a soluble, non-toxic, readily available form. Important for iron homeostasis. Has ferroxidase activity. Iron is taken up in the ferrous form and deposited as ferric hydroxides after oxidation. Also plays a role in delivery of iron to cells. Mediates iron uptake in capsule cells of the developing kidney. Delivery to lysosomes is mediated by the cargo receptor NCOA4 for autophagic degradation and release of iron. This chain is Ferritin heavy chain (FTH1), found in Homo sapiens (Human).